The following is an 864-amino-acid chain: Alanine--tRNA ligase (864 aa).

Zn(2+)-binding residues include H553, H557, C655, and H659. Positions 828 to 847 (VGGKGGGRPDMAQAGGKDPS) are disordered.

This sequence belongs to the class-II aminoacyl-tRNA synthetase family. Zn(2+) serves as cofactor.

The protein localises to the cytoplasm. The catalysed reaction is tRNA(Ala) + L-alanine + ATP = L-alanyl-tRNA(Ala) + AMP + diphosphate. In terms of biological role, catalyzes the attachment of alanine to tRNA(Ala) in a two-step reaction: alanine is first activated by ATP to form Ala-AMP and then transferred to the acceptor end of tRNA(Ala). Also edits incorrectly charged Ser-tRNA(Ala) and Gly-tRNA(Ala) via its editing domain. This is Alanine--tRNA ligase from Hydrogenovibrio crunogenus (strain DSM 25203 / XCL-2) (Thiomicrospira crunogena).